The primary structure comprises 628 residues: Zinc finger protein 555 (628 aa).

The KRAB domain maps to 4–77 (VVFEDVAVDF…ESKIATFTRN (74 aa)). The C2H2-type 1; degenerate zinc-finger motif lies at 172–194 (YQCQECGQAYSCRSHLRMHVRTH). 14 consecutive C2H2-type zinc fingers follow at residues 200-222 (YVCK…VRIH), 228-250 (YECK…LRSH), 256-278 (YKCK…TITH), 284-306 (YKCK…MISH), 312-334 (HKCK…MITH), 340-362 (YECK…ERIH), 368-390 (YECK…ERTH), 396-418 (YECN…MRVH), 424-446 (YECK…MRTH), 452-474 (YECK…VRMH), 480-502 (YECK…MRRH), 508-530 (YKCK…VRTH), 536-558 (YECK…MRLH), and 564-586 (YQCK…VRIH).

This sequence belongs to the krueppel C2H2-type zinc-finger protein family.

The protein resides in the nucleus. Its function is as follows. May be involved in transcriptional regulation. In Homo sapiens (Human), this protein is Zinc finger protein 555 (ZNF555).